The primary structure comprises 194 residues: Peptidyl-tRNA hydrolase (194 aa).

Y16 contacts tRNA. H21 functions as the Proton acceptor in the catalytic mechanism. F67, N69, and N115 together coordinate tRNA.

It belongs to the PTH family. In terms of assembly, monomer.

The protein localises to the cytoplasm. It catalyses the reaction an N-acyl-L-alpha-aminoacyl-tRNA + H2O = an N-acyl-L-amino acid + a tRNA + H(+). Its function is as follows. Hydrolyzes ribosome-free peptidyl-tRNAs (with 1 or more amino acids incorporated), which drop off the ribosome during protein synthesis, or as a result of ribosome stalling. Catalyzes the release of premature peptidyl moieties from peptidyl-tRNA molecules trapped in stalled 50S ribosomal subunits, and thus maintains levels of free tRNAs and 50S ribosomes. This Shigella boydii serotype 18 (strain CDC 3083-94 / BS512) protein is Peptidyl-tRNA hydrolase.